A 379-amino-acid chain; its full sequence is Transcription factor TIP2 (379 aa).

The tract at residues 144-184 (MVGPFESSPTPRSGGGRKRSRATAGFHGGGPANGVEKKEKQ) is disordered. The interval 173 to 186 (GPANGVEKKEKQRR) is basic motif; degenerate. Residues 173-222 (GPANGVEKKEKQRRLRLTEKYNALMLLIPNRTKEDRATVISDAIEYIQEL) form the bHLH domain. Positions 187–222 (LRLTEKYNALMLLIPNRTKEDRATVISDAIEYIQEL) are helix-loop-helix motif.

The protein belongs to the bHLH protein family. Homodimer. Interacts with TDR, but not with EAT1. In terms of tissue distribution, highly expressed in anthers; strong expression in the middle layer and tapetum, and weak expression in the endothecium.

The protein resides in the nucleus. Functionally, transcription factor that binds to the E-box-containing promoter regions of the transcription factors TDR and EAT1, activating their expression. May have a role in specifying the cell pattern of the inner anther walls and functioning in meiosis progression. Required for male reproduction. Acts downstream of UDT1 and GAMYB, but upstream of TDR1 and EAT1 in pollen development. The polypeptide is Transcription factor TIP2 (TIP2) (Oryza sativa subsp. japonica (Rice)).